A 424-amino-acid polypeptide reads, in one-letter code: Putative glutamate--cysteine ligase 2-3 (424 aa).

Disordered stretches follow at residues 1–20 (MQMA…PVLV) and 405–424 (GAAA…VRRP).

It belongs to the glutamate--cysteine ligase type 2 family. YbdK subfamily.

The catalysed reaction is L-cysteine + L-glutamate + ATP = gamma-L-glutamyl-L-cysteine + ADP + phosphate + H(+). Its function is as follows. ATP-dependent carboxylate-amine ligase which exhibits weak glutamate--cysteine ligase activity. The polypeptide is Putative glutamate--cysteine ligase 2-3 (Paenarthrobacter aurescens (strain TC1)).